Here is a 483-residue protein sequence, read N- to C-terminus: Protein nucleotidyltransferase YdiU (483 aa).

ATP is bound by residues Gly100, Gly102, Arg103, Lys123, Asp135, Gly136, Arg189, and Arg196. Asp265 serves as the catalytic Proton acceptor. Mg(2+)-binding residues include Asn266 and Asp275. Position 275 (Asp275) interacts with ATP.

Belongs to the SELO family. It depends on Mg(2+) as a cofactor. The cofactor is Mn(2+).

It carries out the reaction L-seryl-[protein] + ATP = 3-O-(5'-adenylyl)-L-seryl-[protein] + diphosphate. The catalysed reaction is L-threonyl-[protein] + ATP = 3-O-(5'-adenylyl)-L-threonyl-[protein] + diphosphate. It catalyses the reaction L-tyrosyl-[protein] + ATP = O-(5'-adenylyl)-L-tyrosyl-[protein] + diphosphate. The enzyme catalyses L-histidyl-[protein] + UTP = N(tele)-(5'-uridylyl)-L-histidyl-[protein] + diphosphate. It carries out the reaction L-seryl-[protein] + UTP = O-(5'-uridylyl)-L-seryl-[protein] + diphosphate. The catalysed reaction is L-tyrosyl-[protein] + UTP = O-(5'-uridylyl)-L-tyrosyl-[protein] + diphosphate. Its function is as follows. Nucleotidyltransferase involved in the post-translational modification of proteins. It can catalyze the addition of adenosine monophosphate (AMP) or uridine monophosphate (UMP) to a protein, resulting in modifications known as AMPylation and UMPylation. This is Protein nucleotidyltransferase YdiU from Gloeobacter violaceus (strain ATCC 29082 / PCC 7421).